The primary structure comprises 729 residues: Triadin (729 aa).

Residues 1 to 28 (MTEITAEGNASTTTTVIDSKNGSVPKSP) are disordered. Residues 1–47 (MTEITAEGNASTTTTVIDSKNGSVPKSPGKVLKRTVTEDIVTTFSSP) are Cytoplasmic-facing. Over residues 8–24 (GNASTTTTVIDSKNGSV) the composition is skewed to polar residues. The chain crosses the membrane as a helical span at residues 48–68 (AAWLLVIALIITWSAVAIVMF). The Lumenal segment spans residues 69 to 729 (DLVDYKNFSA…NSPGQKQQGQ (661 aa)). Residue asparagine 75 is glycosylated (N-linked (GlcNAc...) asparagine). The segment covering 117 to 129 (EDEEDDDGDEDTD) has biased composition (acidic residues). Disordered regions lie at residues 117-265 (EDEE…EQKD), 281-682 (DLKP…PTKQ), and 705-729 (PFTPADRPGESSGQANSPGQKQQGQ). Composition is skewed to basic and acidic residues over residues 130 to 265 (KGEI…EQKD), 309 to 357 (LEEK…KASE), 371 to 433 (AKKD…KEEI), 444 to 509 (GKKE…EVKP), 516 to 531 (GKKEEKPEPQIKKEAK), 538 to 562 (VQIHKQDIVKPEKTVSHGKPEEKVL), 580 to 598 (KKAEHREREPPSIKTDKPK), and 609 to 674 (ESGK…KEGT). An N-linked (GlcNAc...) asparagine glycan is attached at asparagine 647. Polar residues predominate over residues 715 to 729 (SSGQANSPGQKQQGQ).

Homooligomer of variable subunit number; disulfide-linked. Interacts with CASQ1 and RYR1 in skeletal muscle. Interacts with CASQ2. Phosphorylated by CaMK2. Post-translationally, N-glycosylated.

The protein resides in the cell membrane. It localises to the sarcoplasmic reticulum membrane. Contributes to the regulation of lumenal Ca2+ release via the sarcoplasmic reticulum calcium release channels RYR1 and RYR2, a key step in triggering skeletal and heart muscle contraction. Required for normal organization of the triad junction, where T-tubules and the sarcoplasmic reticulum terminal cisternae are in close contact. Required for normal skeletal muscle strength. Plays a role in excitation-contraction coupling in the heart and in regulating the rate of heart beats. The chain is Triadin (TRDN) from Homo sapiens (Human).